Here is an 80-residue protein sequence, read N- to C-terminus: MDNQEIKLLLIKKLNLEQANITGDSNHIKIIAIGNIFKNVSQVKRQQIIYAPLIDMIKEKHIHAVSIMSYTPEEWEKTKK.

It belongs to the BolA/IbaG family.

This is an uncharacterized protein from Buchnera aphidicola subsp. Acyrthosiphon pisum (strain APS) (Acyrthosiphon pisum symbiotic bacterium).